The primary structure comprises 474 residues: Phenolic acid decarboxylase (474 aa).

The Mn(2+) site is built by Asn-161, His-182, and Glu-224. Prenylated FMN contacts are provided by residues 161–166 (NVGTYR) and 181–182 (MH). Glu-273 functions as the Proton donor in the catalytic mechanism.

This sequence belongs to the UbiD family. YclC subfamily. Prenylated FMN serves as cofactor. Mn(2+) is required as a cofactor.

The catalysed reaction is vanillate + H(+) = guaiacol + CO2. In terms of biological role, involved in the non-oxidative decarboxylation and detoxification of phenolic derivatives under both aerobic and anaerobic conditions. Phenolic acid decarboxylase that catalyzes the reversible decarboxylation of vanillate. In Streptomyces sp. (strain D7), this protein is Phenolic acid decarboxylase.